Here is a 158-residue protein sequence, read N- to C-terminus: Transcription elongation factor GreA (158 aa).

The stretch at 14–76 (VKKLEEELEY…QIENMLKNAN (63 aa)) forms a coiled coil.

This sequence belongs to the GreA/GreB family.

In terms of biological role, necessary for efficient RNA polymerase transcription elongation past template-encoded arresting sites. The arresting sites in DNA have the property of trapping a certain fraction of elongating RNA polymerases that pass through, resulting in locked ternary complexes. Cleavage of the nascent transcript by cleavage factors such as GreA or GreB allows the resumption of elongation from the new 3'terminus. GreA releases sequences of 2 to 3 nucleotides. This Clostridium acetobutylicum (strain ATCC 824 / DSM 792 / JCM 1419 / IAM 19013 / LMG 5710 / NBRC 13948 / NRRL B-527 / VKM B-1787 / 2291 / W) protein is Transcription elongation factor GreA.